The sequence spans 71 residues: Glucose-repressible gene protein (71 aa).

The segment at 19-71 (TATASKEANKDVAKDSNQGVGTRLNAAGDAISDKVSENKHDAKAEAHKQGATH) is disordered. Residues 49–71 (ISDKVSENKHDAKAEAHKQGATH) are compositionally biased toward basic and acidic residues.

This chain is Glucose-repressible gene protein (grg-1), found in Neurospora crassa (strain ATCC 24698 / 74-OR23-1A / CBS 708.71 / DSM 1257 / FGSC 987).